The chain runs to 443 residues: Glutamyl-tRNA reductase (443 aa).

Substrate contacts are provided by residues 49–52 (TCNR), serine 109, 114–116 (EPQ), and glutamine 120. Catalysis depends on cysteine 50, which acts as the Nucleophile. NADP(+) is bound at residue 189–194 (GAGKMC). The interval 421 to 443 (PDSQQTGGDSVEKDADSKQDLTS) is disordered. A compositionally biased stretch (basic and acidic residues) spans 430-443 (SVEKDADSKQDLTS).

This sequence belongs to the glutamyl-tRNA reductase family. As to quaternary structure, homodimer.

The enzyme catalyses (S)-4-amino-5-oxopentanoate + tRNA(Glu) + NADP(+) = L-glutamyl-tRNA(Glu) + NADPH + H(+). It functions in the pathway porphyrin-containing compound metabolism; protoporphyrin-IX biosynthesis; 5-aminolevulinate from L-glutamyl-tRNA(Glu): step 1/2. Functionally, catalyzes the NADPH-dependent reduction of glutamyl-tRNA(Glu) to glutamate 1-semialdehyde (GSA). This Syntrophotalea carbinolica (strain DSM 2380 / NBRC 103641 / GraBd1) (Pelobacter carbinolicus) protein is Glutamyl-tRNA reductase.